We begin with the raw amino-acid sequence, 202 residues long: Securin-2 (202 aa).

Positions 60-105 are disordered; the sequence is TRKALGTVNRATEKSVKTNGPRKQKQPSFSAKKMTEKTVKTKSSVP. Residues 61 to 64 carry the D-box motif; it reads RKAL. The SH3-binding signature appears at 163-173; sequence PPSPVKMPSPP.

This sequence belongs to the securin family. Expressed at low levels in the pituitary, liver, spleen, prostate, testis, ovary, small intestine and colon. Also expressed in various pituitary, testicular, liver and ovarian tumors.

It is found in the cytoplasm. Its subcellular location is the nucleus. The sequence is that of Securin-2 (PTTG2) from Homo sapiens (Human).